The sequence spans 240 residues: Putative outer membrane protein RT0057 (240 aa).

An N-terminal signal peptide occupies residues M1–A20.

It belongs to the OmpW/AlkL family.

Its subcellular location is the cell outer membrane. This is Putative outer membrane protein RT0057 from Rickettsia typhi (strain ATCC VR-144 / Wilmington).